A 333-amino-acid polypeptide reads, in one-letter code: Holliday junction branch migration complex subunit RuvB (333 aa).

A large ATPase domain (RuvB-L) region spans residues methionine 1–tyrosine 182. ATP contacts are provided by residues leucine 21, arginine 22, glycine 63, lysine 66, threonine 67, threonine 68, glutamate 129–phenylalanine 131, arginine 172, tyrosine 182, and arginine 219. Mg(2+) is bound at residue threonine 67. A small ATPAse domain (RuvB-S) region spans residues threonine 183–glutamine 253. A head domain (RuvB-H) region spans residues lysine 256–valine 333. DNA contacts are provided by arginine 311 and arginine 316.

Belongs to the RuvB family. In terms of assembly, homohexamer. Forms an RuvA(8)-RuvB(12)-Holliday junction (HJ) complex. HJ DNA is sandwiched between 2 RuvA tetramers; dsDNA enters through RuvA and exits via RuvB. An RuvB hexamer assembles on each DNA strand where it exits the tetramer. Each RuvB hexamer is contacted by two RuvA subunits (via domain III) on 2 adjacent RuvB subunits; this complex drives branch migration. In the full resolvosome a probable DNA-RuvA(4)-RuvB(12)-RuvC(2) complex forms which resolves the HJ.

Its subcellular location is the cytoplasm. The catalysed reaction is ATP + H2O = ADP + phosphate + H(+). Functionally, the RuvA-RuvB-RuvC complex processes Holliday junction (HJ) DNA during genetic recombination and DNA repair, while the RuvA-RuvB complex plays an important role in the rescue of blocked DNA replication forks via replication fork reversal (RFR). RuvA specifically binds to HJ cruciform DNA, conferring on it an open structure. The RuvB hexamer acts as an ATP-dependent pump, pulling dsDNA into and through the RuvAB complex. RuvB forms 2 homohexamers on either side of HJ DNA bound by 1 or 2 RuvA tetramers; 4 subunits per hexamer contact DNA at a time. Coordinated motions by a converter formed by DNA-disengaged RuvB subunits stimulates ATP hydrolysis and nucleotide exchange. Immobilization of the converter enables RuvB to convert the ATP-contained energy into a lever motion, pulling 2 nucleotides of DNA out of the RuvA tetramer per ATP hydrolyzed, thus driving DNA branch migration. The RuvB motors rotate together with the DNA substrate, which together with the progressing nucleotide cycle form the mechanistic basis for DNA recombination by continuous HJ branch migration. Branch migration allows RuvC to scan DNA until it finds its consensus sequence, where it cleaves and resolves cruciform DNA. The polypeptide is Holliday junction branch migration complex subunit RuvB (Bacillus anthracis (strain A0248)).